The sequence spans 273 residues: SPRY domain-containing SOCS box protein 4 (273 aa).

One can recognise a B30.2/SPRY domain in the interval 34–233 (PARLDQLLDM…MRYINGLDPE (200 aa)). The SOCS box domain occupies 234–273 (PLPLMDLCRRSIRSALGRQRLRDIGSLPLPQSLKNYLQYQ).

Belongs to the SPSB family. Component of the probable ECS(SPSB4) E3 ubiquitin-protein ligase complex which contains CUL5, RNF7/RBX2, Elongin BC complex and SPSB4. Interacts with CUL5; RNF7; ELOB and ELOC. Interacts with MET. Interacts (via B30.2/SPRY domain) with PAWR; this interaction occurs in association with the Elongin BC complex. Interacts with NOS2. Interacts with EPHB2.

The protein resides in the cytoplasm. Its subcellular location is the cytosol. The protein operates within protein modification; protein ubiquitination. Substrate recognition component of a SCF-like ECS (Elongin BC-CUL2/5-SOCS-box protein) E3 ubiquitin-protein ligase complex which mediates the ubiquitination and subsequent proteasomal degradation of target proteins. Negatively regulates nitric oxide (NO) production and limits cellular toxicity in activated macrophages by mediating the ubiquitination and proteasomal degradation of NOS2. Acts as a bridge which links NOS2 with the ECS E3 ubiquitin ligase complex components ELOC and CUL5. Diminishes EphB2-dependent cell repulsive responses by mediating the ubiquitination and degradation of the EphB2/CTF2. Regulates cellular clock function by mediating ubiquitination and proteasomal degradation of the circadian transcriptional repressor NR1D1. The chain is SPRY domain-containing SOCS box protein 4 (Spsb4) from Mus musculus (Mouse).